We begin with the raw amino-acid sequence, 122 residues long: Large ribosomal subunit protein uL14c (122 aa).

The protein belongs to the universal ribosomal protein uL14 family. In terms of assembly, part of the 50S ribosomal subunit.

It localises to the plastid. The protein localises to the chloroplast. Its function is as follows. Binds to 23S rRNA. This is Large ribosomal subunit protein uL14c from Jasminum nudiflorum (Winter jasmine).